A 181-amino-acid chain; its full sequence is Sodium/potassium-transporting ATPase subunit beta-1-interacting protein 3 (181 aa).

A run of 4 helical transmembrane segments spans residues 2–22 (GCCT…LSAL), 35–55 (APIL…FGTI), 62–82 (IMVY…IICF), and 152–172 (VQIL…SISM).

It belongs to the NKAIN family. As to quaternary structure, interacts with ATP1B1. Detected in the brain only and specifically in neurons. Expressed in multiple regions such as cerebral cortex, thalamus, hippocampus, olfactory bulb and brainstem as well as in cerebellum with low expression in granular cell layer.

The protein resides in the cell membrane. This Mus musculus (Mouse) protein is Sodium/potassium-transporting ATPase subunit beta-1-interacting protein 3 (Nkain3).